Here is a 355-residue protein sequence, read N- to C-terminus: Epoxyqueuosine reductase (355 aa).

Catalysis depends on D143, which acts as the Proton donor. A 4Fe-4S ferredoxin-type domain is found at 185–217 (LPLPIDTPATAHCGTCTRCIDICPTQAIIAPHR). The [4Fe-4S] cluster site is built by C197, C200, C203, C207, C223, C250, C253, and C257.

This sequence belongs to the QueG family. As to quaternary structure, monomer. Cob(II)alamin is required as a cofactor. Requires [4Fe-4S] cluster as cofactor.

It localises to the cytoplasm. The catalysed reaction is epoxyqueuosine(34) in tRNA + AH2 = queuosine(34) in tRNA + A + H2O. Its pathway is tRNA modification; tRNA-queuosine biosynthesis. Functionally, catalyzes the conversion of epoxyqueuosine (oQ) to queuosine (Q), which is a hypermodified base found in the wobble positions of tRNA(Asp), tRNA(Asn), tRNA(His) and tRNA(Tyr). The chain is Epoxyqueuosine reductase from Xanthomonas campestris pv. campestris (strain ATCC 33913 / DSM 3586 / NCPPB 528 / LMG 568 / P 25).